A 123-amino-acid polypeptide reads, in one-letter code: Small ribosomal subunit protein uS12 (123 aa).

3-methylthioaspartic acid is present on aspartate 89.

This sequence belongs to the universal ribosomal protein uS12 family. In terms of assembly, part of the 30S ribosomal subunit. Contacts proteins S8 and S17. May interact with IF1 in the 30S initiation complex.

Its function is as follows. With S4 and S5 plays an important role in translational accuracy. Interacts with and stabilizes bases of the 16S rRNA that are involved in tRNA selection in the A site and with the mRNA backbone. Located at the interface of the 30S and 50S subunits, it traverses the body of the 30S subunit contacting proteins on the other side and probably holding the rRNA structure together. The combined cluster of proteins S8, S12 and S17 appears to hold together the shoulder and platform of the 30S subunit. The polypeptide is Small ribosomal subunit protein uS12 (Anaeromyxobacter sp. (strain Fw109-5)).